Reading from the N-terminus, the 926-residue chain is Taz1-interacting factor 1 (926 aa).

2 coiled-coil regions span residues 461 to 496 and 548 to 671; these read REAV…SHQN and SFTD…LKQK. Serine 548 carries the phosphoserine modification. Threonine 550 carries the phosphothreonine modification. Serine 552 bears the Phosphoserine mark.

It belongs to the ATG11 family. In terms of assembly, homodimer and potential homooligomers. Interacts with taz1.

It is found in the preautophagosomal structure membrane. The protein resides in the vacuole membrane. In terms of biological role, involved in cytoplasm to vacuole transport (Cvt), pexophagy, mitophagy and nucleophagy. Recruits mitochondria for their selective degradation via autophagy (mitophagy) during starvation. Works as scaffold proteins that recruit ATG proteins to the preautophagosome (PAS), the site of vesicle/autophagosome formation. Required for atg9 anterograde transport from the mitochondria to the PAS. Required for nitrogen starvation-induced sexual development and for entering the dormant G0 state. The chain is Taz1-interacting factor 1 (taf1) from Schizosaccharomyces pombe (strain 972 / ATCC 24843) (Fission yeast).